A 605-amino-acid chain; its full sequence is Protein ZRG17 (605 aa).

Over 1 to 225 (METPQMNAIQ…DLLSNLPWPK (225 aa)) the chain is Cytoplasmic. Phosphoserine occurs at positions 16 and 131. The segment at 118-178 (PAPKLVPPPP…PSSAASRTSF (61 aa)) is disordered. Over residues 143 to 176 (SKRSSMTLDSPFNFTTSTLQPHQQTPPSSAASRT) the composition is skewed to polar residues. Residues 226–246 (AYIQLSIAALQIFACLITFQV) traverse the membrane as a helical segment. Residues 247-254 (GHLYSWSN) lie on the Lumenal side of the membrane. The helical transmembrane segment at 255 to 275 (FITLSHFITYDIIGSLVIIFV) threads the bilayer. Topologically, residues 276 to 287 (ENLSQFQVWFTG) are cytoplasmic. The chain crosses the membrane as a helical span at residues 288–308 (TITFPFGLNRIDVLLSFALAV). Residue Ser309 is a topological domain, lumenal. A helical transmembrane segment spans residues 310-330 (LCFVGLDLLFHIIEEFIVLFV). The Cytoplasmic portion of the chain corresponds to 331 to 363 (ESGSSLTNNHDHDEINEQIPHSHIANANDSQNE). A helical membrane pass occupies residues 364–384 (NITLWYSILMINLVLSTLSLY). At 385–399 (KTFYANKYSNLKTKN) the chain is on the lumenal side. A helical membrane pass occupies residues 400–420 (PIITITYTAYLFIYPLLLDLL). Residues 421–422 (SS) are Cytoplasmic-facing. Residues 423 to 443 (ISDYLATLVISSLILWHGLTI) form a helical membrane-spanning segment. Topologically, residues 444 to 545 (ARWTSTVLLM…ERLSEFKSRY (102 aa)) are lumenal. The segment covering 473–482 (DTTAHTQQVE) has biased composition (polar residues). The segment at 473 to 497 (DTTAHTQQVESKAAKEKPSVRPRSM) is disordered. Ser498 carries the post-translational modification Phosphoserine. The helical transmembrane segment at 546-566 (ILNYDDIVISKVNFTLYVVLI) threads the bilayer. The Cytoplasmic portion of the chain corresponds to 567-605 (KITMKGGSDDDELMLRLAIDKCIQTSIPTCETTIDIDRI).

It is found in the endoplasmic reticulum membrane. The protein is Protein ZRG17 (ZRG17) of Saccharomyces cerevisiae (strain ATCC 204508 / S288c) (Baker's yeast).